Reading from the N-terminus, the 176-residue chain is RNA pyrophosphohydrolase (176 aa).

The 144-residue stretch at 6–149 (GYRPNVGIVI…KRDVYRRVMK (144 aa)) folds into the Nudix hydrolase domain. The Nudix box signature appears at 38 to 59 (GGINPGESAEQAMYRELFEEVG).

The protein belongs to the Nudix hydrolase family. RppH subfamily. Requires a divalent metal cation as cofactor.

Its function is as follows. Accelerates the degradation of transcripts by removing pyrophosphate from the 5'-end of triphosphorylated RNA, leading to a more labile monophosphorylated state that can stimulate subsequent ribonuclease cleavage. The sequence is that of RNA pyrophosphohydrolase from Klebsiella pneumoniae (strain 342).